Consider the following 700-residue polypeptide: Methionine--tRNA ligase (700 aa).

Residues 12–22 (PYANGNFHIGH) carry the 'HIGH' region motif. The Zn(2+) site is built by Cys143, Cys146, Cys156, and Cys159. Positions 348–352 (KMSKS) match the 'KMSKS' region motif. Lys351 contributes to the ATP binding site. In terms of domain architecture, tRNA-binding spans 594–700 (DFSKIDLRIA…AGAQPGMRVH (107 aa)).

The protein belongs to the class-I aminoacyl-tRNA synthetase family. MetG type 1 subfamily. As to quaternary structure, homodimer. It depends on Zn(2+) as a cofactor.

It is found in the cytoplasm. The enzyme catalyses tRNA(Met) + L-methionine + ATP = L-methionyl-tRNA(Met) + AMP + diphosphate. In terms of biological role, is required not only for elongation of protein synthesis but also for the initiation of all mRNA translation through initiator tRNA(fMet) aminoacylation. This is Methionine--tRNA ligase from Albidiferax ferrireducens (strain ATCC BAA-621 / DSM 15236 / T118) (Rhodoferax ferrireducens).